The sequence spans 601 residues: Elongation factor 4 (601 aa).

One can recognise a tr-type G domain in the interval 6 to 188 (EHIRNFSIIA…EIVRKIPAPE (183 aa)). GTP contacts are provided by residues 18–23 (DHGKST) and 135–138 (NKID).

It belongs to the TRAFAC class translation factor GTPase superfamily. Classic translation factor GTPase family. LepA subfamily.

The protein localises to the cell inner membrane. It carries out the reaction GTP + H2O = GDP + phosphate + H(+). Functionally, required for accurate and efficient protein synthesis under certain stress conditions. May act as a fidelity factor of the translation reaction, by catalyzing a one-codon backward translocation of tRNAs on improperly translocated ribosomes. Back-translocation proceeds from a post-translocation (POST) complex to a pre-translocation (PRE) complex, thus giving elongation factor G a second chance to translocate the tRNAs correctly. Binds to ribosomes in a GTP-dependent manner. The protein is Elongation factor 4 of Hydrogenovibrio crunogenus (strain DSM 25203 / XCL-2) (Thiomicrospira crunogena).